Here is a 143-residue protein sequence, read N- to C-terminus: Actinoxanthin (143 aa).

The N-terminal stretch at 1 to 33 is a signal peptide; sequence MSLRHMSRRASRFGVVAVASIGLAAAAQSVAFA. 2 cysteine pairs are disulfide-bonded: Cys69/Cys78 and Cys119/Cys124.

It belongs to the neocarzinostatin family.

In terms of biological role, binds non-covalently to a chromophore which is the cytotoxic and mutagenic component of the antibiotic. The chromophore binds to DNA as a weak intercalator and causes single- and double-strand breaks. The chain is Actinoxanthin (axnA) from Streptomyces globisporus.